Here is a 470-residue protein sequence, read N- to C-terminus: Asparagine--tRNA ligase (470 aa).

Belongs to the class-II aminoacyl-tRNA synthetase family. Homodimer.

Its subcellular location is the cytoplasm. The catalysed reaction is tRNA(Asn) + L-asparagine + ATP = L-asparaginyl-tRNA(Asn) + AMP + diphosphate + H(+). The protein is Asparagine--tRNA ligase of Blochmanniella pennsylvanica (strain BPEN).